We begin with the raw amino-acid sequence, 151 residues long: Deoxyuridine 5'-triphosphate nucleotidohydrolase (151 aa).

Residues 70–72 (RSG), Asn-83, and 87–89 (VID) contribute to the substrate site.

It belongs to the dUTPase family. Mg(2+) is required as a cofactor.

It catalyses the reaction dUTP + H2O = dUMP + diphosphate + H(+). The protein operates within pyrimidine metabolism; dUMP biosynthesis; dUMP from dCTP (dUTP route): step 2/2. Its function is as follows. This enzyme is involved in nucleotide metabolism: it produces dUMP, the immediate precursor of thymidine nucleotides and it decreases the intracellular concentration of dUTP so that uracil cannot be incorporated into DNA. This Desulfitobacterium hafniense (strain DSM 10664 / DCB-2) protein is Deoxyuridine 5'-triphosphate nucleotidohydrolase.